We begin with the raw amino-acid sequence, 31 residues long: Large ribosomal subunit protein bL21 (31 aa).

This sequence belongs to the bacterial ribosomal protein bL21 family. In terms of assembly, part of the 50S ribosomal subunit. Contacts protein L20.

In terms of biological role, this protein binds to 23S rRNA in the presence of protein L20. This chain is Large ribosomal subunit protein bL21 (rplU), found in Streptococcus thermophilus.